Consider the following 356-residue polypeptide: DNA polymerase IV (356 aa).

The 182-residue stretch at 7-188 folds into the UmuC domain; that stretch reads IIHIDMDAFY…IPVTKFYGVG (182 aa). The Mg(2+) site is built by Asp11 and Asp106. Glu107 is a catalytic residue.

The protein belongs to the DNA polymerase type-Y family. As to quaternary structure, monomer. The cofactor is Mg(2+).

It is found in the cytoplasm. It catalyses the reaction DNA(n) + a 2'-deoxyribonucleoside 5'-triphosphate = DNA(n+1) + diphosphate. Its function is as follows. Poorly processive, error-prone DNA polymerase involved in untargeted mutagenesis. Copies undamaged DNA at stalled replication forks, which arise in vivo from mismatched or misaligned primer ends. These misaligned primers can be extended by PolIV. Exhibits no 3'-5' exonuclease (proofreading) activity. May be involved in translesional synthesis, in conjunction with the beta clamp from PolIII. In Listeria monocytogenes serotype 4a (strain HCC23), this protein is DNA polymerase IV.